The chain runs to 249 residues: MSFIVYPAIDIRGGKCVRLFQGDYGQETVYADSPLAMAKRWVEQGASWVHLVDLDGAKEGKPANAAIIKEIARSIPVPVQVGGGIRTEEQIADYLEAGVARVIVGTAAIEDEPFTKRILQNDGDKIAIGLDCRNGLVATRGWLTTTDVQATELAKRLVTYGAETFIYTDIARDGTMTGPNVEEIAALAMATGKSVIASGGVSQLDDLLTLATHASDGVSGAIVGKALYTDAFTLEEALQRMEGRESYAG.

The active-site Proton acceptor is Asp-10. The Proton donor role is filled by Asp-131.

It belongs to the HisA/HisF family.

It localises to the cytoplasm. It catalyses the reaction 1-(5-phospho-beta-D-ribosyl)-5-[(5-phospho-beta-D-ribosylamino)methylideneamino]imidazole-4-carboxamide = 5-[(5-phospho-1-deoxy-D-ribulos-1-ylimino)methylamino]-1-(5-phospho-beta-D-ribosyl)imidazole-4-carboxamide. It functions in the pathway amino-acid biosynthesis; L-histidine biosynthesis; L-histidine from 5-phospho-alpha-D-ribose 1-diphosphate: step 4/9. The chain is 1-(5-phosphoribosyl)-5-[(5-phosphoribosylamino)methylideneamino] imidazole-4-carboxamide isomerase from Brevibacillus brevis (strain 47 / JCM 6285 / NBRC 100599).